Here is a 248-residue protein sequence, read N- to C-terminus: 2,3-bisphosphoglycerate-dependent phosphoglycerate mutase (248 aa).

Residues 8-15 (RHGESTWN), 21-22 (TG), Arg-60, 87-90 (ERHY), Lys-98, 114-115 (RR), and 183-184 (GN) contribute to the substrate site. His-9 serves as the catalytic Tele-phosphohistidine intermediate. Glu-87 functions as the Proton donor/acceptor in the catalytic mechanism.

Belongs to the phosphoglycerate mutase family. BPG-dependent PGAM subfamily. Homodimer.

It carries out the reaction (2R)-2-phosphoglycerate = (2R)-3-phosphoglycerate. The protein operates within carbohydrate degradation; glycolysis; pyruvate from D-glyceraldehyde 3-phosphate: step 3/5. In terms of biological role, catalyzes the interconversion of 2-phosphoglycerate and 3-phosphoglycerate. This Ralstonia nicotianae (strain ATCC BAA-1114 / GMI1000) (Ralstonia solanacearum) protein is 2,3-bisphosphoglycerate-dependent phosphoglycerate mutase.